A 127-amino-acid chain; its full sequence is Aspartate 1-decarboxylase (127 aa).

S25 functions as the Schiff-base intermediate with substrate; via pyruvic acid in the catalytic mechanism. S25 carries the post-translational modification Pyruvic acid (Ser). Substrate is bound at residue T57. The Proton donor role is filled by Y58. A substrate-binding site is contributed by 73 to 75 (GSA).

The protein belongs to the PanD family. In terms of assembly, heterooctamer of four alpha and four beta subunits. The cofactor is pyruvate. Post-translationally, is synthesized initially as an inactive proenzyme, which is activated by self-cleavage at a specific serine bond to produce a beta-subunit with a hydroxyl group at its C-terminus and an alpha-subunit with a pyruvoyl group at its N-terminus.

The protein localises to the cytoplasm. It carries out the reaction L-aspartate + H(+) = beta-alanine + CO2. Its pathway is cofactor biosynthesis; (R)-pantothenate biosynthesis; beta-alanine from L-aspartate: step 1/1. Catalyzes the pyruvoyl-dependent decarboxylation of aspartate to produce beta-alanine. This chain is Aspartate 1-decarboxylase, found in Dechloromonas aromatica (strain RCB).